We begin with the raw amino-acid sequence, 151 residues long: Class I hydrophobin A (151 aa).

The N-terminal stretch at 1–17 (MQFSVAAVLALATAVAA) is a signal peptide. 4 disulfide bridges follow: C52-C125, C60-C119, C61-C101, and C126-C144.

It belongs to the fungal hydrophobin family. As to quaternary structure, interacts with cutinase cutL1 in a pH-dependent manner. Self-assembles to form functional amyloid fibrils called rodlets. Self-assembly into fibrillar rodlets occurs spontaneously at hydrophobic:hydrophilic interfaces and the rodlets further associate laterally to form amphipathic monolayers. rolA rodlet formation is regulated by the strength of ionic interactions between rolA molecules. Three types of self-assembled structures of rolA are observed: spherical, rod-like, and mesh-like.

It localises to the secreted. It is found in the cell wall. Its function is as follows. Aerial growth, conidiation, and dispersal of filamentous fungi in the environment rely upon a capability of their secreting small amphipathic proteins called hydrophobins (HPBs) with low sequence identity. Class I can self-assemble into an outermost layer of rodlet bundles on aerial cell surfaces, conferring cellular hydrophobicity that supports fungal growth, development and dispersal; whereas Class II form highly ordered films at water-air interfaces through intermolecular interactions but contribute nothing to the rodlet structure. RolA is a class I hydrophobin that undergoes a conformational change after its adsorption to hydrophobic surfaces such as the biodegradable polyester polybutylene succinate-coadipate (PBSA) and recruits the cutinase cutL1, resulting in condensation of cutL1 on the PBSA surface and consequent stimulation of PBSA hydrolysis. Increases also the activity of polyethylene terephthalate hydrolase (PETase) that hydrolyzes polyethylene terephthalate (PET), one of the most well-known polyesters that is widely used as packaging material, when the PET samples are preincubated with the hydrophobin. The wetting effect of rolA probably acts on PET surface to become hydrophilic, which leads PETase easier to contact and attack the surface. In Aspergillus oryzae (strain ATCC 42149 / RIB 40) (Yellow koji mold), this protein is Class I hydrophobin A.